The following is a 318-amino-acid chain: MADVEDRAAKGISDYDQGGVKTTELERKIEDMENKNQELTRENRELKERLERLTGEIEEMKDVEAEMNQRFGEMEKEIEEYEEEKKALEAISTRAVELETEVSNLHDDLITSLNGVDKTAEEVAELKKALAEIVEKLEGCEKEAEGLRKDRAEVEKRVRDLERKIGVLEVREMEEKSKKLRSEEEMREIDDEKKREIEELQKTVIVLNLELVKNVEELKKWKSKKKLTEEALSETQKREKELELKKDELLKKVEEGNKTVFALNERTMKPSNGVRDTNGGDQKGSLEAEYQWPVVAAGSVGAAGLVAATFFVCYSKLR.

The segment at 1–39 (MADVEDRAAKGISDYDQGGVKTTELERKIEDMENKNQEL) is disordered. The Cytoplasmic segment spans residues 1–291 (MADVEDRAAK…QKGSLEAEYQ (291 aa)). A coiled-coil region spans residues 19–260 (GVKTTELERK…KKVEEGNKTV (242 aa)). Residues 23–39 (TELERKIEDMENKNQEL) are compositionally biased toward basic and acidic residues. Residues 292 to 312 (WPVVAAGSVGAAGLVAATFFV) traverse the membrane as a helical segment. Topologically, residues 313–318 (CYSKLR) are mitochondrial intermembrane.

Homodimer. Interacts with PMD2.

It localises to the peroxisome membrane. The protein resides in the mitochondrion outer membrane. Involved in morphogenesis and proliferation of peroxisomes and mitochondria, independently from the previously defined pathway controlled by the FIS1-DRP3 complex. This is Peroxisomal and mitochondrial division factor 1 from Arabidopsis thaliana (Mouse-ear cress).